The following is a 201-amino-acid chain: Large ribosomal subunit protein bL25 (201 aa).

The tract at residues 181 to 201 is disordered; the sequence is APRESEEEAEEEATETAKESE. Positions 185–194 are enriched in acidic residues; it reads SEEEAEEEAT.

This sequence belongs to the bacterial ribosomal protein bL25 family. CTC subfamily. As to quaternary structure, part of the 50S ribosomal subunit; part of the 5S rRNA/L5/L18/L25 subcomplex. Contacts the 5S rRNA. Binds to the 5S rRNA independently of L5 and L18.

Functionally, this is one of the proteins that binds to the 5S RNA in the ribosome where it forms part of the central protuberance. In Thermoanaerobacter pseudethanolicus (strain ATCC 33223 / 39E) (Clostridium thermohydrosulfuricum), this protein is Large ribosomal subunit protein bL25.